The sequence spans 165 residues: uncharacterized protein (165 aa).

Transmembrane regions (helical) follow at residues leucine 7 to valine 27 and lysine 141 to leucine 161.

The protein resides in the cell membrane. This is an uncharacterized protein from Archaeoglobus fulgidus (strain ATCC 49558 / DSM 4304 / JCM 9628 / NBRC 100126 / VC-16).